The following is a 308-amino-acid chain: Cytochrome b (308 aa).

4 helical membrane passes run 1–21, 45–66, 81–101, and 146–166; these read FGLL…LLAA, WLIR…YLHI, WNIG…GYVX, and FFAL…VHLT. The heme b site is built by His-51 and His-65. 2 residues coordinate heme b: His-150 and His-164. Position 169 (His-169) interacts with a ubiquinone. 3 helical membrane passes run 194–214, 256–276, and 288–308; these read TKDV…ALFS, LGGV…PFLH, and LSQI…WVSN.

Belongs to the cytochrome b family. In terms of assembly, the cytochrome bc1 complex contains 11 subunits: 3 respiratory subunits (MT-CYB, CYC1 and UQCRFS1), 2 core proteins (UQCRC1 and UQCRC2) and 6 low-molecular weight proteins (UQCRH/QCR6, UQCRB/QCR7, UQCRQ/QCR8, UQCR10/QCR9, UQCR11/QCR10 and a cleavage product of UQCRFS1). This cytochrome bc1 complex then forms a dimer. Requires heme b as cofactor.

It localises to the mitochondrion inner membrane. Component of the ubiquinol-cytochrome c reductase complex (complex III or cytochrome b-c1 complex) that is part of the mitochondrial respiratory chain. The b-c1 complex mediates electron transfer from ubiquinol to cytochrome c. Contributes to the generation of a proton gradient across the mitochondrial membrane that is then used for ATP synthesis. In Pomatostomus ruficeps (Chestnut-crowned babbler), this protein is Cytochrome b (MT-CYB).